A 670-amino-acid polypeptide reads, in one-letter code: Acetolactate synthase, chloroplastic (670 aa).

2 stretches are compositionally biased toward low complexity: residues 1-48 and 55-77; these read MAAA…SSSS and KSSSPSSISAVLNTTTNVTTTPS. A chloroplast-targeting transit peptide spans 1-55; sequence MAAATTTTTTSSSISFSTKPSPSSSKSPLPISRFSLPFSLNPNKSSSSSRRRGIK. The disordered stretch occupies residues 1 to 94; that stretch reads MAAATTTTTT…ETFISRFAPD (94 aa). E144 serves as a coordination point for thiamine diphosphate. An FAD-binding site is contributed by S186. Q207 serves as a coordination point for thiamine diphosphate. K220 and R246 together coordinate (R)-imazaquin. An FAD-binding site is contributed by R246. Residue K256 participates in chlorimuron-ethyl binding. Residues G308 and 331–332 each bind FAD; that span reads TL. Cysteine sulfinic acid (-SO2H) is present on C340. Residues 349-352 and 371-375 contribute to the FAD site; these read LGMH and GVRFD. 376 to 377 is a binding site for chlorimuron-ethyl; sequence DR. Residues 395-396 and 414-415 each bind FAD; these read DI and DV. Residues 414–446 are a coiled coil; the sequence is DVKLALQGMNKVLENRAEELKLDFGVWRNELNV. Residue 487–488 participates in thiamine diphosphate binding; sequence QH. Position 508–509 (508–509) interacts with FAD; that stretch reads GG. Residues 511-513, 538-540, and 565-570 contribute to the thiamine diphosphate site; these read GAM, DGS, and NQHLGM. Residues D538, N565, and H567 each contribute to the Mg(2+) site. Residues W574 and S653 each contribute to the chlorimuron-ethyl site.

The protein belongs to the TPP enzyme family. As to quaternary structure, homodimer or homotetramer. The acetolactate synthase complex contains both large catalytic subunits and small regulatory subunits. Homodimer. The acetolactate synthase complex contains 4 homodimers of the large catalytic subunits, and 1 homotetramer of the small regulatory subunits. It depends on Mg(2+) as a cofactor. FAD is required as a cofactor. Thiamine diphosphate serves as cofactor.

Its subcellular location is the plastid. The protein resides in the chloroplast. The enzyme catalyses 2 pyruvate + H(+) = (2S)-2-acetolactate + CO2. It functions in the pathway amino-acid biosynthesis; L-isoleucine biosynthesis; L-isoleucine from 2-oxobutanoate: step 1/4. It participates in amino-acid biosynthesis; L-valine biosynthesis; L-valine from pyruvate: step 1/4. Its activity is regulated as follows. Inhibited by asymmetric aryl disulfides, triazolopyrimidine sulfonanilide compounds, isatin derivatives, and sulfonylurea and imidazolinone herbicides. Insensitive to feed-back inhibition by branched-chain amino acids. Catalyzes the formation of acetolactate from pyruvate, the first step in valine and isoleucine biosynthesis. In Arabidopsis thaliana (Mouse-ear cress), this protein is Acetolactate synthase, chloroplastic (ALS).